The sequence spans 83 residues: Ardiscretin (83 aa).

An N-terminal signal peptide occupies residues Met1 to Ser20. The 62-residue stretch at Lys21–Gly82 folds into the LCN-type CS-alpha/beta domain. Intrachain disulfides connect Cys31–Cys81, Cys35–Cys57, Cys43–Cys62, and Cys47–Cys64. Residue Cys81 is modified to Cysteine amide.

In terms of tissue distribution, expressed by the venom gland.

It localises to the secreted. Inhibits the sodium (Nav) currents in an apparent irreversible manner. Produces small depolarization and induces repetitive firing in squid axons. Is specific for arthropods (crickets, triatomides, crabs and squids), but is non-toxic to mice. Shows antibacterial activity against both Gram-positive and Gram-negative bacteria. The protein is Ardiscretin of Tityus discrepans (Venezuelan scorpion).